A 202-amino-acid polypeptide reads, in one-letter code: N-(5'-phosphoribosyl)anthranilate isomerase (202 aa).

Belongs to the TrpF family.

The enzyme catalyses N-(5-phospho-beta-D-ribosyl)anthranilate = 1-(2-carboxyphenylamino)-1-deoxy-D-ribulose 5-phosphate. It participates in amino-acid biosynthesis; L-tryptophan biosynthesis; L-tryptophan from chorismate: step 3/5. The polypeptide is N-(5'-phosphoribosyl)anthranilate isomerase (Listeria welshimeri serovar 6b (strain ATCC 35897 / DSM 20650 / CCUG 15529 / CIP 8149 / NCTC 11857 / SLCC 5334 / V8)).